A 169-amino-acid chain; its full sequence is Cell division inhibitor SulA (169 aa).

The ftsZ binding stretch occupies residues Ala106–Tyr112. A lon protease binding region spans residues Lys162–His169.

The protein belongs to the SulA family. Interacts with FtsZ. Is rapidly cleaved and degraded by the Lon protease once DNA damage is repaired.

Its function is as follows. Component of the SOS system and an inhibitor of cell division. Accumulation of SulA causes rapid cessation of cell division and the appearance of long, non-septate filaments. In the presence of GTP, binds a polymerization-competent form of FtsZ in a 1:1 ratio, thus inhibiting FtsZ polymerization and therefore preventing it from participating in the assembly of the Z ring. This mechanism prevents the premature segregation of damaged DNA to daughter cells during cell division. This Escherichia coli O45:K1 (strain S88 / ExPEC) protein is Cell division inhibitor SulA.